Consider the following 394-residue polypeptide: Tryptophan synthase beta chain (394 aa).

Lys-84 is subject to N6-(pyridoxal phosphate)lysine.

Belongs to the TrpB family. Tetramer of two alpha and two beta chains. It depends on pyridoxal 5'-phosphate as a cofactor.

The enzyme catalyses (1S,2R)-1-C-(indol-3-yl)glycerol 3-phosphate + L-serine = D-glyceraldehyde 3-phosphate + L-tryptophan + H2O. It participates in amino-acid biosynthesis; L-tryptophan biosynthesis; L-tryptophan from chorismate: step 5/5. In terms of biological role, the beta subunit is responsible for the synthesis of L-tryptophan from indole and L-serine. In Clostridium acetobutylicum (strain ATCC 824 / DSM 792 / JCM 1419 / IAM 19013 / LMG 5710 / NBRC 13948 / NRRL B-527 / VKM B-1787 / 2291 / W), this protein is Tryptophan synthase beta chain.